Here is a 270-residue protein sequence, read N- to C-terminus: 3-phenylpropionate-dihydrodiol/cinnamic acid-dihydrodiol dehydrogenase (270 aa).

An NAD(+)-binding site is contributed by 10 to 34; sequence FITGGGSGLGLALVERFIEKGAQVA. Residue serine 143 participates in substrate binding. The active-site Proton acceptor is tyrosine 156.

This sequence belongs to the short-chain dehydrogenases/reductases (SDR) family.

It catalyses the reaction 3-(cis-5,6-dihydroxycyclohexa-1,3-dien-1-yl)propanoate + NAD(+) = 3-(2,3-dihydroxyphenyl)propanoate + NADH + H(+). It carries out the reaction (2E)-3-(cis-5,6-dihydroxycyclohexa-1,3-dien-1-yl)prop-2-enoate + NAD(+) = (2E)-3-(2,3-dihydroxyphenyl)prop-2-enoate + NADH + H(+). It participates in aromatic compound metabolism; 3-phenylpropanoate degradation. Functionally, converts 3-phenylpropionate-dihydrodiol (PP-dihydrodiol) and cinnamic acid-dihydrodiol (CI-dihydrodiol) into 3-(2,3-dihydroxylphenyl)propanoic acid (DHPP) and 2,3-dihydroxicinnamic acid (DHCI), respectively. The sequence is that of 3-phenylpropionate-dihydrodiol/cinnamic acid-dihydrodiol dehydrogenase (hcaB) from Escherichia coli.